The chain runs to 1693 residues: MEAHQFIKAPGITTAIEQAALAAANSALANAVVVRPFLSHQQIEILINLMQPRQLVFRPEVFWNHPIQRVIHNELELYCRARSGRCLEIGAHPRSINDNPNVVHRCFLRPAGRDVQRWYTAPTRGPAANCRRSALRGLPAADRTYCFDGFSGCNFPAETGIALYSLHDMSPSDVAEAMFRHGMTRLYAALHLPPEVLLPPGTYRTASYLLIHDGRRVVVTYEGDTSAGYNHDVSNLRSWIRTTKVTGDHPLVIERVRAIGCHFVLLLTAAPEPSPMPYVPYPRSTEVYVRSIFGPGGTPSLFPTSCSTKSTFHAVPAHIWDRLMLFGATLDDQAFCCSRLMTYLRGISYKVTVGTLVANEGWNASEDALTAVITAAYLTICHQRYLRTQAISKGMRRLEREHAQKFITRLYSWLFEKSGRDYIPGRQLEFYAQCRRWLSAGFHLDPRVLVFDESAPCHCRTAIRKAVSKFCCFMKWLGQECTCFLQPAEGVVGDQGHDNEAYEGSDVDPAESAISDISGSYVVPGTALQPLYQALDLPAEIVARAGRLTATVKVSQVDGRIDCETLLGNKTFRTSFVDGAVLETNGPERHNLSFDASQSTMAAGPFSLTYAASAAGLEVRYVAAGLDHRAVFAPGVSPRSAPGEVTAFCSALYRFNREAQRLSLTGNFWFHPEGLLGPFAPFSPGHVWESANPFCGESTLYTRTWSEVDAVPSPAQPDLGFTSEPSIPSRAATPTPAAPLPPPAPDPSPTLSAPARGEPAPGATARAPAITHQTARHRRLLFTYPDGSKVFAGSLFESTCTWLVNASNVDHRPGGGLCHAFYQRYPASFDAASFVMRDGAAAYTLTPRPIIHAVAPDYRLEHNPKRLEAAYRETCSRLGTAAYPLLGTGIYQVPIGPSFDAWERNHRPGDELYLPELAARWFEANRPTCPTLTITEDVARTANLAIELDSATDVGRACAGCRVTPGVVQYQFTAGVPGSGKSRSITQADVDVVVVPTRELRNAWRRRGFAAFTPHTAARVTQGRRVVIDEAPSLPPHLLLLHMQRAATVHLLGDPNQIPAIDFEHAGLVPAIRPDLAPTSWWHVTHRCPADVCELIRGAYPMIQTTSRVLRSLFWGEPAVGQKLVFTQAAKAANPGSVTVHEAQGATYTETTIIATADARGLIQSSRAHAIVALTRHTEKCVIIDAPGLLREVGISDAIVNNFFLAGGEIGHQRPSVIPRGNPDANVDTLAAFPPSCQISAFHQLAEELGHRPAPVAAVLPPCPELEQGLLYLPQELTTCDSVVTFELTDIVHCRMAAPSQRKAVLSTLVGRYGRRTKLYNASHSDVRDSLARFIPAIGPVQVTTCELYELVEAMVEKGQDGSAVLELDLCSRDVSRITFFQKDCNKFTTGETIAHGKVGQGISAWSKTFCALFGPWFRAIEKAILALLPQGVFYGDAFDDTVFSAAVAAAKASMVFENDFSEFDSTQNNFSLGLECAIMEECGMPQWLIRLYHLIRSAWILQAPKESLRGFWKKHSGEPGTLLWNTVWNMAVITHCYDFRDLQVAAFKGDDSIVLCSEYRQSPGAAVLIAGCGLKLKVDFRPIGLYAGVVVAPGLGALPDVVRFAGRLTEKNWGPGPERAEQLRLAVSDFLRKLTNVAQMCVDVVSRVYGVSPGLVHNLIGMLQAVADGKAHFTESVKPVLDLTNSILCRVE.

Residues 56-240 form the Alphavirus-like MT domain; it reads VFRPEVFWNH…HDVSNLRSWI (185 aa). Residues 60–240 form a methyltransferase region; sequence EVFWNHPIQR…HDVSNLRSWI (181 aa). The tract at residues 241-439 is Y-domain; it reads RTTKVTGDHP…FYAQCRRWLS (199 aa). Cys434 and Cys481 form a disulfide bridge. Residues 442-509 are protease; sequence FHLDPRVLVF…EAYEGSDVDP (68 aa). Residues 510–691 are zinc-binding; that stretch reads AESAISDISG…FSPGHVWESA (182 aa). Zn(2+) contacts are provided by His671, Glu673, and His686. The interval 712–771 is disordered; it reads PSPAQPDLGFTSEPSIPSRAATPTPAAPLPPPAPDPSPTLSAPARGEPAPGATARAPAIT. Residues 712–778 form a hinge region; sequence PSPAQPDLGF…AITHQTARHR (67 aa). The segment covering 725 to 735 has biased composition (low complexity); it reads PSIPSRAATPT. Over residues 736–748 the composition is skewed to pro residues; the sequence is PAAPLPPPAPDPS. The Macro domain occupies 775-921; sequence ARHRRLLFTY…LYLPELAARW (147 aa). The segment at 785–942 is X-domain; that stretch reads PDGSKVFAGS…TITEDVARTA (158 aa). Residues 934 to 1082 enclose the (+)RNA virus helicase ATP-binding domain; the sequence is ITEDVARTAN…RPDLAPTSWW (149 aa). Positions 960–1204 are NTPase/helicase; that stretch reads GCRVTPGVVQ…ISDAIVNNFF (245 aa). Position 975-982 (975-982) interacts with ATP; sequence GVPGSGKS. The (+)RNA virus helicase C-terminal domain occupies 1083-1216; it reads HVTHRCPADV…GGEIGHQRPS (134 aa). The RNA-directed RNA polymerase stretch occupies residues 1207-1693; sequence GGEIGHQRPS…LTNSILCRVE (487 aa). One can recognise a RdRp catalytic domain in the interval 1454–1565; the sequence is SMVFENDFSE…LCSEYRQSPG (112 aa).

This sequence belongs to the hepevirus non-structural polyprotein family. In terms of assembly, the protease domain interacts with host EIF2AK4 (via C-terminus); this interaction inhibits dimerization of EIF2AK4 and prevents EIF2AK4-mediated phosphorylation of host EIF2A. Requires Mg(2+) as cofactor. Post-translationally, ORF1 polyprotein does not seem to be processed into distinct enzymatic domains by a viral protease belonging to ORF1, but could be processed by a host serine protease like thrombin.

The protein localises to the host cytoplasm. Its subcellular location is the host perinuclear region. It carries out the reaction RNA(n) + a ribonucleoside 5'-triphosphate = RNA(n+1) + diphosphate. The enzyme catalyses GTP + S-adenosyl-L-methionine = N(7)-methyl-GTP + S-adenosyl-L-homocysteine. With respect to regulation, putative protease: Inhibited by chymostatin. Methyltransferase: Displays a capping enzyme activity. This function is necessary since all viral RNAs are synthesized in the cytoplasm, and host capping enzymes are restricted to the nucleus. The enzymatic reaction involves a covalent link between 7-methyl-GMP and the methyltransferase, whereas eukaryotic capping enzymes form a covalent complex only with GMP. Methyltransferase catalyzes transfer of a methyl group from S-adenosylmethionine to GTP and GDP to yield m(7)GTP or m(7)GDP. GDP is a better substrate than GTP. This enzyme also displays guanylyltransferase activity to form a covalent complex, methyltransferase-m(7)GMP, from which 7-methyl-GMP is transferred to the mRNA to create the cap structure. Functionally, Y-domain: Indispensable for virus replication. In terms of biological role, putative protease: The putative protease domain although necessary for replication of the virus may not be a protease but rather a structural Zn(2+)-binding domain. Inhibits induction of IFN-beta by MDA5 and RIG-I pathways and down-regulates the expression of MDA5. Its function is as follows. NTPase/helicase: Multi-functional protein that exhibits NTPase and RNA unwinding activities. Hydrolyzes all NTPs efficiently and unwinds RNA duplexes containing 5' overhangs. Possesses a sequence independent RNA-5'-triphosphatase (RTPase) activity suggestive of its role in forming viral cap structure. Also participates in viral genome replication, RNA translocation and genome packaging/unpackaging. RNA-directed RNA polymerase: Plays an essential role in the virus replication. Binds to the 3'-end of the genomic RNA to initiate viral replication. The protein is Non-structural polyprotein pORF1 of Hepatitis E virus genotype 1 (isolate Human/Pakistan/Sar-55) (HEV-1).